Consider the following 206-residue polypeptide: MLSAQLEAYLAEINLPATAEQKKQLLDFVGMLNKWNKAYNLTSVRDPEAMLVRHIMDSLVVSPHLQGEHFIDVGTGPGLPGIPLAIMNPDKTFVLLDSLGKRIRFQKQVAFELGIHNISSIESRVEAYQPEQKFDGVLSRAFASIHDMLTWCHHLPAEHGQFYALKGQLSDEEMQQIPAGFVVTETIELKVPRLDEQRHLLKIIKE.

S-adenosyl-L-methionine contacts are provided by residues G74, L79, 125-126, and R140; that span reads VE.

Belongs to the methyltransferase superfamily. RNA methyltransferase RsmG family.

It localises to the cytoplasm. It carries out the reaction guanosine(527) in 16S rRNA + S-adenosyl-L-methionine = N(7)-methylguanosine(527) in 16S rRNA + S-adenosyl-L-homocysteine. In terms of biological role, specifically methylates the N7 position of guanine in position 527 of 16S rRNA. This Shewanella sp. (strain MR-7) protein is Ribosomal RNA small subunit methyltransferase G.